Reading from the N-terminus, the 98-residue chain is Cuticle protein 67, isoform A (98 aa).

6 repeat units span residues 7-10 (AAPA), 15-18 (AAPA), 22-25 (AAPA), 79-82 (AAPA), 86-89 (AAPA), and 92-95 (AAPA).

Functionally, component of the cuticle of migratory locust which contains more than 100 different structural proteins. The polypeptide is Cuticle protein 67, isoform A (Locusta migratoria (Migratory locust)).